The following is a 121-amino-acid chain: Autophagy-related protein 8f (121 aa).

Glycine 117 carries Phosphatidylethanolamine amidated glycine lipidation. Residues 118–121 constitute a propeptide, removed in mature form; it reads FGSP.

Belongs to the ATG8 family. In terms of assembly, interacts with ATG4. Interacts with NBR1. Interacts with ATI1 and ATI2. Interacts with SH3P2. In terms of processing, the C-terminal 4 residues are removed by ATG4 to expose Gly-117 at the C-terminus. This Gly-117 forms then a thioester bond with the 'Cys-558' of ATG7 (E1-like activating enzyme) before being transferred to the 'Cys-258' of ATG3 (the specific E2 conjugating enzyme), in order to be finally amidated with phosphatidylethanolamine. This lipid modification anchors ATG8 to autophagosomes. In terms of tissue distribution, constitutively expressed.

The protein resides in the cytoplasmic vesicle. It is found in the autophagosome membrane. It localises to the vacuole membrane. Its subcellular location is the cytoplasm. The protein localises to the cytoskeleton. Functionally, ubiquitin-like modifier involved in autophagosomes formation. May mediate the delivery of the autophagosomes to the vacuole via the microtubule cytoskeleton. The sequence is that of Autophagy-related protein 8f (ATG8F) from Arabidopsis thaliana (Mouse-ear cress).